The following is a 444-amino-acid chain: ATP-dependent protease ATPase subunit HslU (444 aa).

Residues I20 and 62 to 67 each bind ATP; that span reads GVGKTE. The disordered stretch occupies residues 130–158; sequence EDRILDALVPPPRGASGEPERGEDNSARQ. ATP contacts are provided by D257, E322, and R394.

The protein belongs to the ClpX chaperone family. HslU subfamily. In terms of assembly, a double ring-shaped homohexamer of HslV is capped on each side by a ring-shaped HslU homohexamer. The assembly of the HslU/HslV complex is dependent on binding of ATP.

Its subcellular location is the cytoplasm. ATPase subunit of a proteasome-like degradation complex; this subunit has chaperone activity. The binding of ATP and its subsequent hydrolysis by HslU are essential for unfolding of protein substrates subsequently hydrolyzed by HslV. HslU recognizes the N-terminal part of its protein substrates and unfolds these before they are guided to HslV for hydrolysis. This is ATP-dependent protease ATPase subunit HslU from Bordetella pertussis (strain Tohama I / ATCC BAA-589 / NCTC 13251).